The sequence spans 78 residues: Large ribosomal subunit protein bL28 (78 aa).

The interval 1–20 (MSRVCQVTGKRPVTGNNRSH) is disordered.

It belongs to the bacterial ribosomal protein bL28 family.

This Vibrio atlanticus (strain LGP32) (Vibrio splendidus (strain Mel32)) protein is Large ribosomal subunit protein bL28.